We begin with the raw amino-acid sequence, 305 residues long: 3-methyl-2-oxobutanoate hydroxymethyltransferase (305 aa).

2 residues coordinate Mg(2+): Asp52 and Asp95. 3-methyl-2-oxobutanoate is bound by residues 52 to 53, Asp95, and Lys125; that span reads DS. Residue Glu127 coordinates Mg(2+). Glu194 functions as the Proton acceptor in the catalytic mechanism.

It belongs to the PanB family. As to quaternary structure, homodecamer; pentamer of dimers. Mg(2+) serves as cofactor.

It localises to the cytoplasm. It catalyses the reaction 3-methyl-2-oxobutanoate + (6R)-5,10-methylene-5,6,7,8-tetrahydrofolate + H2O = 2-dehydropantoate + (6S)-5,6,7,8-tetrahydrofolate. It functions in the pathway cofactor biosynthesis; (R)-pantothenate biosynthesis; (R)-pantoate from 3-methyl-2-oxobutanoate: step 1/2. Its function is as follows. Catalyzes the reversible reaction in which hydroxymethyl group from 5,10-methylenetetrahydrofolate is transferred onto alpha-ketoisovalerate to form ketopantoate. The chain is 3-methyl-2-oxobutanoate hydroxymethyltransferase from Anaeromyxobacter sp. (strain Fw109-5).